Consider the following 233-residue polypeptide: Glucosamine-6-phosphate deaminase (233 aa).

Aspartate 62 (proton acceptor; for enolization step) is an active-site residue. The active-site For ring-opening step is asparagine 128. Residue histidine 130 is the Proton acceptor; for ring-opening step of the active site. Glutamate 135 acts as the For ring-opening step in catalysis.

Belongs to the glucosamine/galactosamine-6-phosphate isomerase family. NagB subfamily.

It carries out the reaction alpha-D-glucosamine 6-phosphate + H2O = beta-D-fructose 6-phosphate + NH4(+). It functions in the pathway amino-sugar metabolism; N-acetylneuraminate degradation; D-fructose 6-phosphate from N-acetylneuraminate: step 5/5. Catalyzes the reversible isomerization-deamination of glucosamine 6-phosphate (GlcN6P) to form fructose 6-phosphate (Fru6P) and ammonium ion. The protein is Glucosamine-6-phosphate deaminase of Streptococcus thermophilus (strain ATCC BAA-491 / LMD-9).